Consider the following 405-residue polypeptide: Cytochrome P450 130 (405 aa).

Substrate-binding residues include D93 and H97. Residues R101, G243, R295, Y318, S348, H352, and C354 each contribute to the heme site.

Belongs to the cytochrome P450 family. As to quaternary structure, homodimer. Heme is required as a cofactor.

The chain is Cytochrome P450 130 (cyp130) from Mycobacterium tuberculosis (strain CDC 1551 / Oshkosh).